We begin with the raw amino-acid sequence, 447 residues long: UPF0210 protein Ldb1026 (447 aa).

Belongs to the UPF0210 family. As to quaternary structure, homodimer.

The protein is UPF0210 protein Ldb1026 of Lactobacillus delbrueckii subsp. bulgaricus (strain ATCC 11842 / DSM 20081 / BCRC 10696 / JCM 1002 / NBRC 13953 / NCIMB 11778 / NCTC 12712 / WDCM 00102 / Lb 14).